A 142-amino-acid chain; its full sequence is Hemoglobin subunit alpha-A (142 aa).

The region spanning 2-142 is the Globin domain; that stretch reads VLSANDKTNV…VGNVLTAKYR (141 aa). His-59 is an O2 binding site. His-88 contributes to the heme b binding site.

Belongs to the globin family. As to quaternary structure, heterotetramer of two alpha chains and two beta chains. In terms of tissue distribution, red blood cells.

Its function is as follows. Involved in oxygen transport from the lung to the various peripheral tissues. In Aegypius monachus (Cinereous vulture), this protein is Hemoglobin subunit alpha-A (HBAA).